Reading from the N-terminus, the 321-residue chain is Peptide transport system permease protein SapB (321 aa).

Over 1–8 (MIIFTLRR) the chain is Cytoplasmic. Residues 9–29 (LLLLLVTLFFLTFIGFSLSYF) traverse the membrane as a helical segment. The Periplasmic segment spans residues 30 to 80 (TPHAPLQGASLWNAWVFWFNGLLHWDFGVSSINGQLISEQLKEVFPATMEL). In terms of domain architecture, ABC transmembrane type-1 spans 74–302 (FPATMELCIL…SLVIVVNVIS (229 aa)). Residues 81–101 (CILAFGFALMVGIPVGMLAGV) traverse the membrane as a helical segment. At 102–113 (TRSKWPDRFISA) the chain is on the cytoplasmic side. The helical transmembrane segment at 114–134 (LALLGFSIPVFWLALLLTLFF) threads the bilayer. At 135–174 (SLTLGWLPVSGRFDLLYEVKPVTGFAIIDAWISDSPWRDE) the chain is on the periplasmic side. Residues 175–195 (MVMSAIRHMVLPVLTLSVAPT) traverse the membrane as a helical segment. Residues 196 to 248 (TEVIRLMRISTIEVYDQNYVKAAATRGLSRFTILRRHVLHNALPPVIPRLGLQ) lie on the Cytoplasmic side of the membrane. A helical transmembrane segment spans residues 249–269 (FSTMLTLAMITEMVFSWPGLG). The Periplasmic segment spans residues 270-280 (RWLIHAIRQQD). The helical transmembrane segment at 281–301 (YAAISAGVMVIGSLVIVVNVI) threads the bilayer. The Cytoplasmic portion of the chain corresponds to 302–321 (SDILGAMANPLKHKEWYALR).

This sequence belongs to the binding-protein-dependent transport system permease family. OppBC subfamily.

It is found in the cell inner membrane. Functionally, involved in a peptide intake transport system that plays a role in the resistance to antimicrobial peptides. This Salmonella typhimurium (strain LT2 / SGSC1412 / ATCC 700720) protein is Peptide transport system permease protein SapB.